The chain runs to 315 residues: Gamma-hemolysin component C (315 aa).

Positions M1 to A29 are cleaved as a signal peptide.

The protein belongs to the aerolysin family. As to quaternary structure, toxicity requires sequential binding and synergistic association of a class S and a class F component which form heterooligomeric complexes. HlgB (class F) associates with either hlgA thus forming an AB toxin or with hlgC thus forming a CB toxin.

Its subcellular location is the secreted. Functionally, toxin that seems to act by forming pores in the membrane of the cell. Has a hemolytic and a leucotoxic activity. This Staphylococcus aureus (strain NCTC 8325 / PS 47) protein is Gamma-hemolysin component C (hlgC).